The following is a 215-amino-acid chain: HTH-type transcriptional repressor FabR (215 aa).

Residues 10 to 70 enclose the HTH tetR-type domain; the sequence is KTRRSLVEAA…TMVDESGLML (61 aa). A DNA-binding region (H-T-H motif) is located at residues 33–52; it reads SLREVAREAGIAPTSFYRHF.

Homodimer.

Its subcellular location is the cytoplasm. In terms of biological role, represses the transcription of fabB, involved in unsaturated fatty acid (UFA) biosynthesis. By controlling UFA production, FabR directly influences the physical properties of the membrane bilayer. The polypeptide is HTH-type transcriptional repressor FabR (Escherichia coli O9:H4 (strain HS)).